A 510-amino-acid polypeptide reads, in one-letter code: Hepatic triacylglycerol lipase (510 aa).

The signal sequence occupies residues 1–21; sequence MGNPLQISIFLVFCIFIQSSA. N79 carries an N-linked (GlcNAc...) asparagine glycan. Residue S169 is the Nucleophile of the active site. D195 functions as the Charge relay system in the catalytic mechanism. The segment at 255-278 is essential for determining substrate specificity; it reads CHFLELYKHIAEHGLNAITQTIKC. H280 acts as the Charge relay system in catalysis. The PLAT domain occupies 353–487; the sequence is YHYQFKIQFI…HPSQEKVFVN (135 aa). N-linked (GlcNAc...) asparagine glycosylation is present at N398.

This sequence belongs to the AB hydrolase superfamily. Lipase family. As to quaternary structure, homodimer.

It is found in the secreted. The enzyme catalyses a triacylglycerol + H2O = a diacylglycerol + a fatty acid + H(+). It carries out the reaction a 1-acyl-sn-glycero-3-phosphocholine + H2O = sn-glycerol 3-phosphocholine + a fatty acid + H(+). It catalyses the reaction a 1,2-diacyl-sn-glycero-3-phosphocholine + H2O = a 2-acyl-sn-glycero-3-phosphocholine + a fatty acid + H(+). The catalysed reaction is 1,2,3-tri-(9Z-octadecenoyl)-glycerol + H2O = di-(9Z)-octadecenoylglycerol + (9Z)-octadecenoate + H(+). The enzyme catalyses 1,2-di-(9Z-octadecenoyl)-sn-glycero-3-phosphocholine + H2O = (9Z-octadecenoyl)-sn-glycero-3-phosphocholine + (9Z)-octadecenoate + H(+). It carries out the reaction 1,2,3-tributanoylglycerol + H2O = dibutanoylglycerol + butanoate + H(+). It catalyses the reaction 1,2-dihexadecanoyl-sn-glycero-3-phosphocholine + H2O = hexadecanoyl-sn-glycero-3-phosphocholine + hexadecanoate + H(+). The catalysed reaction is 1,2-di-(9Z-octadecenoyl)-sn-glycerol + H2O = 2-(9Z-octadecenoyl)-glycerol + (9Z)-octadecenoate + H(+). The enzyme catalyses 1,2,3-tri-(9Z-octadecenoyl)-glycerol + H2O = 2,3-di-(9Z)-octadecenoyl-sn-glycerol + (9Z)-octadecenoate + H(+). It carries out the reaction 1-(9Z-octadecenoyl)-sn-glycero-3-phospho-L-serine + H2O = sn-glycero-3-phospho-L-serine + (9Z)-octadecenoate + H(+). It catalyses the reaction 1-hexadecanoyl-sn-glycero-3-phosphocholine + H2O = sn-glycerol 3-phosphocholine + hexadecanoate + H(+). The catalysed reaction is 1,3-di-(9Z-octadecenoyl)-glycerol + H2O = 3-(9Z-octadecenoyl)-sn-glycerol + (9Z)-octadecenoate + H(+). In terms of biological role, catalyzes the hydrolysis of triglycerides and phospholipids present in circulating plasma lipoproteins, including chylomicrons, intermediate density lipoproteins (IDL), low density lipoproteins (LDL) of large size and high density lipoproteins (HDL), releasing free fatty acids (FFA) and smaller lipoprotein particles. Also exhibits lysophospholipase activity. Can hydrolyze both neutral lipid and phospholipid substrates but shows a greater binding affinity for neutral lipid substrates than phospholipid substrates. In native LDL, preferentially hydrolyzes the phosphatidylcholine species containing polyunsaturated fatty acids at sn-2 position. In Mus musculus (Mouse), this protein is Hepatic triacylglycerol lipase (Lipc).